The following is a 778-amino-acid chain: Endonuclease MutS2 (778 aa).

Residue glycine 328 to threonine 335 participates in ATP binding. In terms of domain architecture, Smr spans leucine 702–lysine 777.

The protein belongs to the DNA mismatch repair MutS family. MutS2 subfamily. In terms of assembly, homodimer. Binds to stalled ribosomes, contacting rRNA.

Its function is as follows. Endonuclease that is involved in the suppression of homologous recombination and thus may have a key role in the control of bacterial genetic diversity. Functionally, acts as a ribosome collision sensor, splitting the ribosome into its 2 subunits. Detects stalled/collided 70S ribosomes which it binds and splits by an ATP-hydrolysis driven conformational change. Acts upstream of the ribosome quality control system (RQC), a ribosome-associated complex that mediates the extraction of incompletely synthesized nascent chains from stalled ribosomes and their subsequent degradation. Probably generates substrates for RQC. This is Endonuclease MutS2 from Streptococcus pneumoniae (strain P1031).